A 154-amino-acid chain; its full sequence is Nuclear cap-binding protein subunit 2 (154 aa).

MRNA-binding positions include Y10, Y33, 102–106, 113–117, and 123–124; these read RCDWD, RQYGR, and QV. In terms of domain architecture, RRM spans 30-108; that stretch reads STLYMGNLSF…RIIRCDWDAG (79 aa).

Belongs to the RRM NCBP2 family. As to quaternary structure, component of the nuclear cap-binding complex (CBC), a heterodimer composed of Cbp80 and Cbp20 that interacts with m7GpppG-capped RNA.

It is found in the nucleus. Functionally, component of the cap-binding complex (CBC), which binds co-transcriptionally to the 5' cap of pre-mRNAs and is involved in various processes such as pre-mRNA splicing and RNA-mediated gene silencing (RNAi). The CBC complex is involved in miRNA-mediated RNA interference and is required for primary microRNAs (miRNAs) processing. Also involved in innate immunity via the short interfering RNAs (siRNAs) processing machinery by restricting the viral RNA production. In the CBC complex, Cbp20 recognizes and binds capped RNAs (m7GpppG-capped RNA) but requires Cbp80 to stabilize the movement of its N-terminal loop and lock the CBC into a high affinity cap-binding state with the cap structure. This is Nuclear cap-binding protein subunit 2 from Bombyx mori (Silk moth).